A 262-amino-acid polypeptide reads, in one-letter code: Protein N-terminal and lysine N-methyltransferase EFM7 (262 aa).

Residues Trp59, 86 to 88 (GAA), Asp108, Trp143, and Ser171 contribute to the S-adenosyl-L-methionine site.

It belongs to the class I-like SAM-binding methyltransferase superfamily. EFM7 family.

The protein localises to the cytoplasm. Functionally, S-adenosyl-L-methionine-dependent protein methyltransferase that trimethylates the N-terminal glycine 'Gly-2' of elongation factor 1-alpha, before also catalyzing the mono- and dimethylation of 'Lys-3'. The polypeptide is Protein N-terminal and lysine N-methyltransferase EFM7 (Candida albicans (strain SC5314 / ATCC MYA-2876) (Yeast)).